We begin with the raw amino-acid sequence, 169 residues long: MLNRLESLTQRVGGSNELIDQWLHARKELLVSYCTVIGIKPQKEKHTPLNAKTLENFCHNLVDYLSSGHFHIYDRIIKEVEGASSPKMALTAKIHPALKNNTQTIMAFHDRYTNIEIDDDSCTEYQQALSDIGEALDARFKLEDQLIQWAAESWQAAQLADADKKSQVN.

It belongs to the Rsd/AlgQ family. In terms of assembly, interacts with RpoD.

The protein resides in the cytoplasm. Its function is as follows. Binds RpoD and negatively regulates RpoD-mediated transcription activation by preventing the interaction between the primary sigma factor RpoD with the catalytic core of the RNA polymerase and with promoter DNA. May be involved in replacement of the RNA polymerase sigma subunit from RpoD to RpoS during the transition from exponential growth to the stationary phase. This is Regulator of sigma D from Yersinia pseudotuberculosis serotype O:1b (strain IP 31758).